The primary structure comprises 349 residues: Phosphorylcholine phosphatase (349 aa).

The signal sequence occupies residues 1 to 22 (MTFAKGILAALALAAAVGQASA). Asp-53 functions as the Nucleophile in the catalytic mechanism. Mg(2+) contacts are provided by Asp-53 and Asp-55. Residue Asp-55 is the Proton donor of the active site. Cysteines 109 and 116 form a disulfide. Residue Asp-284 participates in Mg(2+) binding.

Belongs to the HAD-like hydrolase superfamily. Monomer. Homodimer. Homotetramer. It depends on Mg(2+) as a cofactor.

It is found in the periplasm. It catalyses the reaction phosphocholine + H2O = choline + phosphate. The enzyme catalyses phosphoethanolamine + H2O = ethanolamine + phosphate. Activity is inhibited by high concentrations of phosphorylcholine, phosphorylethanolamine, choline or betaine. Displays different properties depending on the substrate utilized, the pH conditions as well as the presence or absence of metal ions. At pH 5, activity is inhibited by Al(3+) ions. At pH 7.4, the enzyme cannot catalyze the hydrolysis of pNPP, phosphorylethanolamine is a poor substrate in either the presence or absence of divalent cations, and activity measured with phosphorylcholine is independent of divalent cations or is not inhibited by Al(3+) ions. Mg(2+) produces identical activation at pH 5.0 and 7.4, but Zn(2+) is an activator at pH 5.0 and becomes an inhibitor at pH 7.4. This inhibition at pH 7.4 may be due to a transition from octahedral to tetrahedral coordination geometry, which is produced by hydrolysis of the Zn-hexacoordinated complex. Its function is as follows. Catalyzes the hydrolysis of phosphorylcholine (PCho) to produce choline and inorganic phosphate. Can also hydrolyze phosphorylethanolamine and the nonphysiological substrate p-nitrophenylphosphate (pNPP). Shows higher affinity and catalytic efficiency with phosphorylcholine as substrate. Functionally, is probably involved in virulence. The bacteria may break down various host compounds or host cell membranes through the coordinated action of phospholipase C and phosphocholine phosphatase. The final consequence of the action of these enzymes is an increase of the free choline concentration, which may promote the pathogenicity of P.aeruginosa. In Pseudomonas aeruginosa (strain ATCC 15692 / DSM 22644 / CIP 104116 / JCM 14847 / LMG 12228 / 1C / PRS 101 / PAO1), this protein is Phosphorylcholine phosphatase.